The primary structure comprises 285 residues: Bifunctional protein FolD (285 aa).

NADP(+) is bound by residues 164-166 (GRS), Ser189, and Ile230.

This sequence belongs to the tetrahydrofolate dehydrogenase/cyclohydrolase family. As to quaternary structure, homodimer.

The enzyme catalyses (6R)-5,10-methylene-5,6,7,8-tetrahydrofolate + NADP(+) = (6R)-5,10-methenyltetrahydrofolate + NADPH. It catalyses the reaction (6R)-5,10-methenyltetrahydrofolate + H2O = (6R)-10-formyltetrahydrofolate + H(+). Its pathway is one-carbon metabolism; tetrahydrofolate interconversion. In terms of biological role, catalyzes the oxidation of 5,10-methylenetetrahydrofolate to 5,10-methenyltetrahydrofolate and then the hydrolysis of 5,10-methenyltetrahydrofolate to 10-formyltetrahydrofolate. This chain is Bifunctional protein FolD, found in Oceanobacillus iheyensis (strain DSM 14371 / CIP 107618 / JCM 11309 / KCTC 3954 / HTE831).